The sequence spans 185 residues: MARDEFPGWHGTTIIGVKKGGEVVIAGDGQVSLGQTVIKGTARKVRRLSPGGFDVVAGFAGSTADAFTLLERLEAKLEATPGQLARASVELAKDWRTDKYLQKLEAMLIVSDGKDIFVITGAGDVLEPEHDVTAIGSGGNYALAAARGMMDSPRSAEEVARDAMAIAADICVYTNGNLTVETISA.

Threonine 12 is an active-site residue. 3 residues coordinate Na(+): alanine 168, cysteine 171, and threonine 174.

This sequence belongs to the peptidase T1B family. HslV subfamily. In terms of assembly, a double ring-shaped homohexamer of HslV is capped on each side by a ring-shaped HslU homohexamer. The assembly of the HslU/HslV complex is dependent on binding of ATP.

The protein resides in the cytoplasm. It carries out the reaction ATP-dependent cleavage of peptide bonds with broad specificity.. Its activity is regulated as follows. Allosterically activated by HslU binding. Its function is as follows. Protease subunit of a proteasome-like degradation complex believed to be a general protein degrading machinery. This Roseobacter denitrificans (strain ATCC 33942 / OCh 114) (Erythrobacter sp. (strain OCh 114)) protein is ATP-dependent protease subunit HslV.